The primary structure comprises 287 residues: GPN-loop GTPase 3 (287 aa).

GTP is bound at residue 12 to 17 (GAGKST). Residues 69–71 (GPN) carry the Gly-Pro-Asn (GPN)-loop; involved in dimer interface motif. 172 to 175 (SKMD) serves as a coordination point for GTP.

The protein belongs to the GPN-loop GTPase family. As to quaternary structure, heterodimers with GPN1 or GPN2. Binds to RNA polymerase II (RNAPII).

Functionally, small GTPase required for proper nuclear import of RNA polymerase II and III (RNAPII and RNAPIII). May act at an RNAP assembly step prior to nuclear import. This is GPN-loop GTPase 3 from Cryptococcus neoformans var. neoformans serotype D (strain B-3501A) (Filobasidiella neoformans).